The following is a 269-amino-acid chain: Ribosomal RNA small subunit methyltransferase J (269 aa).

S-adenosyl-L-methionine-binding positions include 125–126 (ER) and Asp-179.

The protein belongs to the methyltransferase superfamily. RsmJ family.

Its subcellular location is the cytoplasm. The catalysed reaction is guanosine(1516) in 16S rRNA + S-adenosyl-L-methionine = N(2)-methylguanosine(1516) in 16S rRNA + S-adenosyl-L-homocysteine + H(+). Its function is as follows. Specifically methylates the guanosine in position 1516 of 16S rRNA. In Pseudomonas savastanoi pv. phaseolicola (strain 1448A / Race 6) (Pseudomonas syringae pv. phaseolicola (strain 1448A / Race 6)), this protein is Ribosomal RNA small subunit methyltransferase J.